Consider the following 530-residue polypeptide: Light-independent protochlorophyllide reductase subunit B (530 aa).

A [4Fe-4S] cluster-binding site is contributed by Asp-36. The active-site Proton donor is Asp-290. Residue 425–426 (GL) coordinates substrate. Residues 448–483 (LGHLGGHASETKTSSKGINQSPNNHSPAGESIHWTS) form a disordered region. Residues 458–473 (TKTSSKGINQSPNNHS) show a composition bias toward polar residues.

This sequence belongs to the ChlB/BchB/BchZ family. In terms of assembly, protochlorophyllide reductase is composed of three subunits; ChlL, ChlN and ChlB. Forms a heterotetramer of two ChlB and two ChlN subunits. The cofactor is [4Fe-4S] cluster.

It catalyses the reaction chlorophyllide a + oxidized 2[4Fe-4S]-[ferredoxin] + 2 ADP + 2 phosphate = protochlorophyllide a + reduced 2[4Fe-4S]-[ferredoxin] + 2 ATP + 2 H2O. It participates in porphyrin-containing compound metabolism; chlorophyll biosynthesis (light-independent). In terms of biological role, component of the dark-operative protochlorophyllide reductase (DPOR) that uses Mg-ATP and reduced ferredoxin to reduce ring D of protochlorophyllide (Pchlide) to form chlorophyllide a (Chlide). This reaction is light-independent. The NB-protein (ChlN-ChlB) is the catalytic component of the complex. This Prochlorococcus marinus (strain SARG / CCMP1375 / SS120) protein is Light-independent protochlorophyllide reductase subunit B.